A 413-amino-acid polypeptide reads, in one-letter code: uncharacterized protein (413 aa).

The 153-residue stretch at 3-155 (MEPRVLRREE…SRVRLSVPAG (153 aa)) folds into the N-acetyltransferase domain. Residues 86–88 (VSV), 94–99 (RRGVLT), and 122–123 (SE) each bind acetyl-CoA. Tyr127 functions as the Proton donor in the catalytic mechanism. The active-site Proton acceptor; via carboxylate is the Phe413.

This sequence belongs to the acetyltransferase Eis family. In terms of assembly, homohexamer; trimer of dimers.

This is an uncharacterized protein from Streptomyces coelicolor (strain ATCC BAA-471 / A3(2) / M145).